The chain runs to 391 residues: Ribonucleoside-diphosphate reductase small chain (391 aa).

D135, E166, and H169 together coordinate Fe cation. Y173 is a catalytic residue. Positions 229, 263, and 266 each coordinate Fe cation.

The protein belongs to the ribonucleoside diphosphate reductase small chain family. As to quaternary structure, heterodimer of a large and a small subunit. The cofactor is Fe cation.

It localises to the nucleus. The protein resides in the cytoplasm. The catalysed reaction is a 2'-deoxyribonucleoside 5'-diphosphate + [thioredoxin]-disulfide + H2O = a ribonucleoside 5'-diphosphate + [thioredoxin]-dithiol. Its function is as follows. Provides the precursors necessary for DNA synthesis. Catalyzes the biosynthesis of deoxyribonucleotides from the corresponding ribonucleotides. The chain is Ribonucleoside-diphosphate reductase small chain (suc22) from Schizosaccharomyces pombe (strain 972 / ATCC 24843) (Fission yeast).